The primary structure comprises 177 residues: SAALAGTIIAGASLGFQILDKVLGELGKVSRKIAIGVDNESGGSTTALNAYFRSGTGDVILPEFVPNQKALLYSGRKDTGPVATGAVAAFAYYMSNGHTLGVMFSVPFDYNFYSNWWDVKVYSGKRRADQGMYEDMYYGNPYRGDNGWHQKNLGYGLRMKGIMTSAGEAILQIKISR.

Residues 3 to 12 (ALAGTIIAGA) are plays an important role in the hemolytic activity. The tract at residues 11 to 30 (GASLGFQILDKVLGELGKVS) is N-terminal region. Residues S54, V87, S105, P107, Y133, Y137, and Y138 each coordinate phosphocholine.

It belongs to the actinoporin family. Sea anemone subfamily. Octamer or nonamer in membranes. Monomer in the soluble state.

It is found in the secreted. The protein localises to the nematocyst. Its subcellular location is the target cell membrane. Functionally, pore-forming protein that forms cations-selective hydrophilic pores of around 1 nm and causes cytolysis. Pore formation is a multi-step process that involves specific recognition of membrane sphingomyelin (but neither cholesterol nor phosphatidylcholine) using aromatic rich region and adjacent phosphocholine (POC) binding site, firm binding to the membrane (mainly driven by hydrophobic interactions) accompanied by the transfer of the N-terminal region to the lipid-water interface and finally pore formation after oligomerization of monomers This toxin shows hemolytic activity. In Heteractis magnifica (Magnificent sea anemone), this protein is DELTA-stichotoxin-Hmg2b.